Consider the following 892-residue polypeptide: Alanine--tRNA ligase (892 aa).

Positions 594, 598, 702, and 706 each coordinate Zn(2+).

Belongs to the class-II aminoacyl-tRNA synthetase family. Zn(2+) is required as a cofactor.

It localises to the cytoplasm. It carries out the reaction tRNA(Ala) + L-alanine + ATP = L-alanyl-tRNA(Ala) + AMP + diphosphate. In terms of biological role, catalyzes the attachment of alanine to tRNA(Ala) in a two-step reaction: alanine is first activated by ATP to form Ala-AMP and then transferred to the acceptor end of tRNA(Ala). Also edits incorrectly charged Ser-tRNA(Ala) and Gly-tRNA(Ala) via its editing domain. This Pyrobaculum arsenaticum (strain DSM 13514 / JCM 11321 / PZ6) protein is Alanine--tRNA ligase.